Here is a 1023-residue protein sequence, read N- to C-terminus: 2-oxoglutarate dehydrogenase complex component E1 (1023 aa).

A mitochondrion-targeting transit peptide spans 1–40 (MFHLRTCAAKLRPLTASQTVKTFSQNRPAAARTFQQIRCY). Lysine 74 is subject to N6-succinyllysine. At serine 100 the chain carries Phosphoserine. 3 residues coordinate Ca(2+): histidine 143, aspartate 156, and aspartate 158. Arginine 312 is a thiamine diphosphate binding site. Lysine 401 carries the post-translational modification N6-acetyllysine. Thiamine diphosphate-binding residues include aspartate 411, asparagine 444, and isoleucine 446. Residues aspartate 411, asparagine 444, and isoleucine 446 each contribute to the Mg(2+) site. Lysine 534 participates in a covalent cross-link: Glycyl lysine isopeptide (Lys-Gly) (interchain with G-Cter in ubiquitin). The residue at position 564 (lysine 564) is an N6-succinyllysine. A thiamine diphosphate-binding site is contributed by glutamine 676. Lysine 970 carries the post-translational modification N6-acetyllysine.

The protein belongs to the alpha-ketoglutarate dehydrogenase family. Homodimer. The 2-oxoglutarate dehydrogenase complex is composed of OGDH (2-oxoglutarate dehydrogenase; E1), DLST (dihydrolipoamide succinyltransferase; E2), DLD (dihydrolipoamide dehydrogenase; E3), and the assembly factor KGD4. It contains multiple copies of the three enzymatic components (E1, E2 and E3). In the nucleus, the 2-oxoglutarate dehydrogenase complex associates with KAT2A. Interacts with ABHD11; this interaction maintains the functional lipoylation of the 2-oxoglutarate dehydrogenase complex. It depends on thiamine diphosphate as a cofactor. Mg(2+) serves as cofactor.

Its subcellular location is the mitochondrion. It localises to the nucleus. The catalysed reaction is N(6)-[(R)-lipoyl]-L-lysyl-[protein] + 2-oxoglutarate + H(+) = N(6)-[(R)-S(8)-succinyldihydrolipoyl]-L-lysyl-[protein] + CO2. With respect to regulation, calcium ions and ADP stimulate, whereas ATP and NADH reduce catalytic activity. In terms of biological role, 2-oxoglutarate dehydrogenase (E1o) component of the 2-oxoglutarate dehydrogenase complex (OGDHC). Participates in the first step, rate limiting for the overall conversion of 2-oxoglutarate to succinyl-CoA and CO(2) catalyzed by the whole OGDHC. Catalyzes the irreversible decarboxylation of 2-oxoglutarate (alpha-ketoglutarate) via the thiamine diphosphate (ThDP) cofactor and subsequent transfer of the decarboxylated acyl intermediate on an oxidized dihydrolipoyl group that is covalently amidated to the E2 enzyme (dihydrolipoyllysine-residue succinyltransferase or DLST). Plays a key role in the Krebs (citric acid) cycle, which is a common pathway for oxidation of fuel molecules, including carbohydrates, fatty acids, and amino acids. Can catalyze the decarboxylation of 2-oxoadipate in vitro, but at a much lower rate than 2-oxoglutarate. Mainly active in the mitochondrion. A fraction of the 2-oxoglutarate dehydrogenase complex also localizes in the nucleus and is required for lysine succinylation of histones: associates with KAT2A on chromatin and provides succinyl-CoA to histone succinyltransferase KAT2A. The protein is 2-oxoglutarate dehydrogenase complex component E1 of Homo sapiens (Human).